We begin with the raw amino-acid sequence, 426 residues long: MVIKKPRGTYDLFGEEIEVFNKINDVLKTISNTYNCHEIKTPIFEHKELYIRNIGESSDIVTKEFYDFKDKSDRELALRPENTVGVIRSVVENKLLYTNPFPLKFYYLGPMFRYERPQSGRNRQFYQFGIEFIGVKNILNEIEGILFALDILKKLNITNWKLKVNYIGSIETREKWINSLKKYFNKYKDELSEDSKNRIEKNPLRILDDKVDGSKSFVKSCPKIEEFLTKEEKEESDNFIKCLKTIVNEFEFDSTLVRGLDYYSGPVFEIVSQSNKLTGQSTIIGGGRYTKLTKELGDNDYICFGFALGMERLMLAYRDENQFLSNNSVDVYIASIGSVESELVAMNFANQLRNLNYRVEVNFDLKKIDKQFKNSNKYNPKIILIYGDEDHKNKQVTLKNQKTLENKVIKLNELNNKIKEFFESDK.

Belongs to the class-II aminoacyl-tRNA synthetase family. As to quaternary structure, homodimer.

The protein resides in the cytoplasm. The catalysed reaction is tRNA(His) + L-histidine + ATP = L-histidyl-tRNA(His) + AMP + diphosphate + H(+). The protein is Histidine--tRNA ligase of Malacoplasma penetrans (strain HF-2) (Mycoplasma penetrans).